Reading from the N-terminus, the 335-residue chain is Mycobacterial beta-ketoacyl-[acyl-carrier-protein] synthase III (335 aa).

Catalysis depends on residues C122 and H258. An ACP-binding region spans residues 259 to 263 (QANSR). N289 is an active-site residue.

This sequence belongs to the thiolase-like superfamily. FabH family. Homodimer.

Its subcellular location is the cytoplasm. It carries out the reaction malonyl-[ACP] + dodecanoyl-CoA + H(+) = 3-oxotetradecanoyl-[ACP] + CO2 + CoA. The protein operates within lipid metabolism; fatty acid biosynthesis. It participates in lipid metabolism; mycolic acid biosynthesis. Functionally, catalyzes the condensation reaction of fatty acid synthesis by the addition to an acyl acceptor of two carbons from malonyl-ACP. Catalyzes the first condensation reaction which initiates fatty acid synthesis and may therefore play a role in governing the total rate of fatty acid production. Possesses both acetoacetyl-ACP synthase and acetyl transacylase activities. Its substrate specificity determines the biosynthesis of branched-chain and/or straight-chain of fatty acids. The sequence is that of Mycobacterial beta-ketoacyl-[acyl-carrier-protein] synthase III from Mycobacterium ulcerans (strain Agy99).